Reading from the N-terminus, the 133-residue chain is Small ribosomal subunit protein uS8 (133 aa).

A disordered region spans residues 1–32; sequence MANHDPISDMLTRIRNASEKRHESTKVPASRM. Residues 16–25 are compositionally biased toward basic and acidic residues; it reads NASEKRHEST.

Belongs to the universal ribosomal protein uS8 family. Part of the 30S ribosomal subunit. Contacts proteins S5 and S12.

One of the primary rRNA binding proteins, it binds directly to 16S rRNA central domain where it helps coordinate assembly of the platform of the 30S subunit. This chain is Small ribosomal subunit protein uS8, found in Synechococcus sp. (strain CC9311).